Consider the following 132-residue polypeptide: Acetylcholinesterase (132 aa).

The N-linked (GlcNAc...) asparagine glycan is linked to N37. C45 and C72 form a disulfide bridge.

It belongs to the type-B carboxylesterase/lipase family.

The protein resides in the synapse. It is found in the secreted. The protein localises to the cell membrane. The catalysed reaction is acetylcholine + H2O = choline + acetate + H(+). Rapidly hydrolyzes choline released into the synapse. The polypeptide is Acetylcholinesterase (ACE-1) (Culex pipiens pipiens (Northern house mosquito)).